A 309-amino-acid polypeptide reads, in one-letter code: Sulfate adenylyltransferase subunit 2 (309 aa).

It belongs to the PAPS reductase family. CysD subfamily. As to quaternary structure, heterodimer composed of CysD, the smaller subunit, and CysN.

It carries out the reaction sulfate + ATP + H(+) = adenosine 5'-phosphosulfate + diphosphate. The protein operates within sulfur metabolism; hydrogen sulfide biosynthesis; sulfite from sulfate: step 1/3. With CysN forms the ATP sulfurylase (ATPS) that catalyzes the adenylation of sulfate producing adenosine 5'-phosphosulfate (APS) and diphosphate, the first enzymatic step in sulfur assimilation pathway. APS synthesis involves the formation of a high-energy phosphoric-sulfuric acid anhydride bond driven by GTP hydrolysis by CysN coupled to ATP hydrolysis by CysD. This Mycobacterium bovis (strain ATCC BAA-935 / AF2122/97) protein is Sulfate adenylyltransferase subunit 2.